Here is a 158-residue protein sequence, read N- to C-terminus: Large ribosomal subunit protein uL11 (158 aa).

Belongs to the universal ribosomal protein uL11 family. As to quaternary structure, part of the ribosomal stalk of the 50S ribosomal subunit. Interacts with L10 and the large rRNA to form the base of the stalk. L10 forms an elongated spine to which L12 dimers bind in a sequential fashion forming a multimeric L10(L12)X complex.

In terms of biological role, forms part of the ribosomal stalk which helps the ribosome interact with GTP-bound translation factors. This is Large ribosomal subunit protein uL11 from Methanosphaerula palustris (strain ATCC BAA-1556 / DSM 19958 / E1-9c).